Here is a 237-residue protein sequence, read N- to C-terminus: Ribosomal RNA small subunit methyltransferase G (237 aa).

S-adenosyl-L-methionine contacts are provided by residues glycine 78, phenylalanine 83, 129-130 (AE), and arginine 146.

It belongs to the methyltransferase superfamily. RNA methyltransferase RsmG family.

The protein resides in the cytoplasm. In terms of biological role, specifically methylates the N7 position of a guanine in 16S rRNA. This chain is Ribosomal RNA small subunit methyltransferase G, found in Mesoplasma florum (strain ATCC 33453 / NBRC 100688 / NCTC 11704 / L1) (Acholeplasma florum).